A 464-amino-acid polypeptide reads, in one-letter code: Cysteine--tRNA ligase (464 aa).

A Zn(2+)-binding site is contributed by C28. A 'HIGH' region motif is present at residues 30 to 40 (PTVYDHSHIGH). Zn(2+)-binding residues include C205, H230, and E234. The short motif at 263–267 (KMSKS) is the 'KMSKS' region element. Position 266 (K266) interacts with ATP.

It belongs to the class-I aminoacyl-tRNA synthetase family. Requires Zn(2+) as cofactor.

The protein localises to the cytoplasm. The enzyme catalyses tRNA(Cys) + L-cysteine + ATP = L-cysteinyl-tRNA(Cys) + AMP + diphosphate. This Ignicoccus hospitalis (strain KIN4/I / DSM 18386 / JCM 14125) protein is Cysteine--tRNA ligase.